The primary structure comprises 203 residues: Large ribosomal subunit protein bL25 (203 aa).

The protein belongs to the bacterial ribosomal protein bL25 family. CTC subfamily. In terms of assembly, part of the 50S ribosomal subunit; part of the 5S rRNA/L5/L18/L25 subcomplex. Contacts the 5S rRNA. Binds to the 5S rRNA independently of L5 and L18.

Functionally, this is one of the proteins that binds to the 5S RNA in the ribosome where it forms part of the central protuberance. The polypeptide is Large ribosomal subunit protein bL25 (Cupriavidus pinatubonensis (strain JMP 134 / LMG 1197) (Cupriavidus necator (strain JMP 134))).